Here is a 375-residue protein sequence, read N- to C-terminus: Probable peptidoglycan glycosyltransferase FtsW (375 aa).

Over 1–16 (MNLNFKLNLKEIERYD) the chain is Cytoplasmic. Residues 17–37 (LVILLMAVALTCFGVVMVYSA) traverse the membrane as a helical segment. The Periplasmic segment spans residues 38–49 (SSVMATKKFHDG). The chain crosses the membrane as a helical span at residues 50 to 70 (FYFLKRQGIYAILGCAAMIVA). Over 71–81 (MRIDYRQWREY) the chain is Cytoplasmic. A helical membrane pass occupies residues 82 to 102 (AVPILLGCLLLLLLVFIPGIG). Residues 103 to 145 (GAAKGASRWIRFPGFNLQPSELAKIALIMYMAYSLDKKQEKVK) are Periplasmic-facing. Residues 146-166 (FFSTGFAPYMVLLAILLAILL) traverse the membrane as a helical segment. Residues 167 to 169 (KQH) are Cytoplasmic-facing. A helical transmembrane segment spans residues 170–190 (DLGSALTMGGVAILMLFAAGT). Residues 191-193 (RPR) are Periplasmic-facing. The chain crosses the membrane as a helical span at residues 194–214 (YILGMVVLTLPFLYFLVMNVD). The Cytoplasmic segment spans residues 215–233 (YRRRRILAYLNPWEDPTNT). Residues 234–254 (GFQIIQSWLAFGNGGIIGQGL) traverse the membrane as a helical segment. The Periplasmic portion of the chain corresponds to 255 to 279 (GEGKQKMFFLPEAHTDFILSVVGEE). The helical transmembrane segment at 280–300 (LGLIGVIVIAAMFLMLVLRGV) threads the bilayer. Residues 301 to 312 (RVALMAQDPFGR) are Cytoplasmic-facing. A helical membrane pass occupies residues 313 to 333 (FLAFGIVTLLGIQAFVNMGVV). The Periplasmic portion of the chain corresponds to 334–343 (TGLLPTKGLA). The chain crosses the membrane as a helical span at residues 344–364 (LPFISYGGSSLIVTLFAVGIL). Residues 365–375 (LNVSTRMKGTP) lie on the Cytoplasmic side of the membrane.

It belongs to the SEDS family. FtsW subfamily.

The protein resides in the cell inner membrane. The catalysed reaction is [GlcNAc-(1-&gt;4)-Mur2Ac(oyl-L-Ala-gamma-D-Glu-L-Lys-D-Ala-D-Ala)](n)-di-trans,octa-cis-undecaprenyl diphosphate + beta-D-GlcNAc-(1-&gt;4)-Mur2Ac(oyl-L-Ala-gamma-D-Glu-L-Lys-D-Ala-D-Ala)-di-trans,octa-cis-undecaprenyl diphosphate = [GlcNAc-(1-&gt;4)-Mur2Ac(oyl-L-Ala-gamma-D-Glu-L-Lys-D-Ala-D-Ala)](n+1)-di-trans,octa-cis-undecaprenyl diphosphate + di-trans,octa-cis-undecaprenyl diphosphate + H(+). It functions in the pathway cell wall biogenesis; peptidoglycan biosynthesis. In terms of biological role, peptidoglycan polymerase that is essential for cell division. The polypeptide is Probable peptidoglycan glycosyltransferase FtsW (Geobacter metallireducens (strain ATCC 53774 / DSM 7210 / GS-15)).